The sequence spans 274 residues: Large ribosomal subunit protein uL2 (274 aa).

The disordered stretch occupies residues 223–274 (VAMNPVDHPHGGGEGKTSGGRHPVSPWGVPTKGYKTRSNKRTDKFIVRRRAK).

The protein belongs to the universal ribosomal protein uL2 family. As to quaternary structure, part of the 50S ribosomal subunit. Forms a bridge to the 30S subunit in the 70S ribosome.

Its function is as follows. One of the primary rRNA binding proteins. Required for association of the 30S and 50S subunits to form the 70S ribosome, for tRNA binding and peptide bond formation. It has been suggested to have peptidyltransferase activity; this is somewhat controversial. Makes several contacts with the 16S rRNA in the 70S ribosome. This is Large ribosomal subunit protein uL2 from Colwellia psychrerythraea (strain 34H / ATCC BAA-681) (Vibrio psychroerythus).